The primary structure comprises 350 residues: MTEPAFFAPARRFEVGEIAALTGARLRDASQEKITISRLAPAAEGGEETLVFIDGRRHASRIGSVRAAALLCSEELAENAPDGVAVLVSPKPQQAFAMVARLLFPEANRPQPVTGETGVSPRAVIAEGAVVEDGAIIEAGAVIGVGASVGRGTIVGPNTVIGARCSIGRDGYVGPNVMLQYAVIGDRVIIHPGAQIGQDGFGFLPGPNGFEKNPQIGRVIIQDDVEIGANTTIDRGALSDTIIGEGTKIDNLVQIGHNVHIGRRCVIAGLCGLSGSVKLGDYVMLGGQVGIADHITIGNRAQLAASSGVMDDVPEGERWAGVPAKPMRQAFREIAALRSLVQDMRKGSKG.

His257 (proton acceptor) is an active-site residue.

It belongs to the transferase hexapeptide repeat family. LpxD subfamily. Homotrimer.

The catalysed reaction is a UDP-3-O-[(3R)-3-hydroxyacyl]-alpha-D-glucosamine + a (3R)-hydroxyacyl-[ACP] = a UDP-2-N,3-O-bis[(3R)-3-hydroxyacyl]-alpha-D-glucosamine + holo-[ACP] + H(+). The protein operates within bacterial outer membrane biogenesis; LPS lipid A biosynthesis. Its function is as follows. Catalyzes the N-acylation of UDP-3-O-acylglucosamine using 3-hydroxyacyl-ACP as the acyl donor. Is involved in the biosynthesis of lipid A, a phosphorylated glycolipid that anchors the lipopolysaccharide to the outer membrane of the cell. The sequence is that of UDP-3-O-acylglucosamine N-acyltransferase from Chelativorans sp. (strain BNC1).